The sequence spans 1183 residues: DNA-directed RNA polymerase subunit beta (1183 aa).

Residues 1151–1162 are compositionally biased toward acidic residues; the sequence is EIEMADVDDEDA. A disordered region spans residues 1151–1183; sequence EIEMADVDDEDAAERKVDLQQKSAPESQKETTD.

The protein belongs to the RNA polymerase beta chain family. In terms of assembly, the RNAP catalytic core consists of 2 alpha, 1 beta, 1 beta' and 1 omega subunit. When a sigma factor is associated with the core the holoenzyme is formed, which can initiate transcription.

The enzyme catalyses RNA(n) + a ribonucleoside 5'-triphosphate = RNA(n+1) + diphosphate. Its function is as follows. DNA-dependent RNA polymerase catalyzes the transcription of DNA into RNA using the four ribonucleoside triphosphates as substrates. This chain is DNA-directed RNA polymerase subunit beta, found in Staphylococcus epidermidis (strain ATCC 12228 / FDA PCI 1200).